A 348-amino-acid polypeptide reads, in one-letter code: Fructose-1,6-bisphosphatase class 1 (348 aa).

Mg(2+)-binding residues include glutamate 92, aspartate 111, leucine 113, and aspartate 114. Substrate-binding positions include 114–117 and asparagine 204; that span reads DGSS. Residue glutamate 276 coordinates Mg(2+).

The protein belongs to the FBPase class 1 family. In terms of assembly, homotetramer. It depends on Mg(2+) as a cofactor.

It localises to the cytoplasm. It carries out the reaction beta-D-fructose 1,6-bisphosphate + H2O = beta-D-fructose 6-phosphate + phosphate. It functions in the pathway carbohydrate biosynthesis; gluconeogenesis. This Methylorubrum populi (strain ATCC BAA-705 / NCIMB 13946 / BJ001) (Methylobacterium populi) protein is Fructose-1,6-bisphosphatase class 1.